Consider the following 304-residue polypeptide: Pseudouridine-5'-phosphate glycosidase (304 aa).

The Proton donor role is filled by glutamate 25. Residues lysine 88 and valine 108 each coordinate substrate. Aspartate 140 lines the Mn(2+) pocket. Residue 142 to 144 participates in substrate binding; it reads SAD. Lysine 161 (nucleophile) is an active-site residue.

This sequence belongs to the pseudouridine-5'-phosphate glycosidase family. In terms of assembly, homotrimer. Requires Mn(2+) as cofactor.

It carries out the reaction D-ribose 5-phosphate + uracil = psi-UMP + H2O. In terms of biological role, catalyzes the reversible cleavage of pseudouridine 5'-phosphate (PsiMP) to ribose 5-phosphate and uracil. Functions biologically in the cleavage direction, as part of a pseudouridine degradation pathway. This Paracoccus denitrificans (strain Pd 1222) protein is Pseudouridine-5'-phosphate glycosidase.